Consider the following 223-residue polypeptide: von Willebrand factor C domain-containing protein 2-like (223 aa).

The signal sequence occupies residues 1-21 (MGPFLPAICVVLLALNAAVSP). 2 consecutive VWFC domains span residues 51–110 (KGCV…PECK) and 114–172 (NFCE…PICK).

Its subcellular location is the secreted. It is found in the synapse. Its function is as follows. May play a role in bone differentiation and matrix mineralization. May play a role in neural development. This is von Willebrand factor C domain-containing protein 2-like (vwc2l) from Danio rerio (Zebrafish).